A 185-amino-acid polypeptide reads, in one-letter code: ATP synthase subunit delta (185 aa).

This sequence belongs to the ATPase delta chain family. F-type ATPases have 2 components, F(1) - the catalytic core - and F(0) - the membrane proton channel. F(1) has five subunits: alpha(3), beta(3), gamma(1), delta(1), epsilon(1). F(0) has three main subunits: a(1), b(2) and c(10-14). The alpha and beta chains form an alternating ring which encloses part of the gamma chain. F(1) is attached to F(0) by a central stalk formed by the gamma and epsilon chains, while a peripheral stalk is formed by the delta and b chains.

The protein localises to the cell inner membrane. In terms of biological role, f(1)F(0) ATP synthase produces ATP from ADP in the presence of a proton or sodium gradient. F-type ATPases consist of two structural domains, F(1) containing the extramembraneous catalytic core and F(0) containing the membrane proton channel, linked together by a central stalk and a peripheral stalk. During catalysis, ATP synthesis in the catalytic domain of F(1) is coupled via a rotary mechanism of the central stalk subunits to proton translocation. Functionally, this protein is part of the stalk that links CF(0) to CF(1). It either transmits conformational changes from CF(0) to CF(1) or is implicated in proton conduction. This is ATP synthase subunit delta from Phocaeicola vulgatus (strain ATCC 8482 / DSM 1447 / JCM 5826 / CCUG 4940 / NBRC 14291 / NCTC 11154) (Bacteroides vulgatus).